We begin with the raw amino-acid sequence, 243 residues long: Adenosylcobinamide-GDP ribazoletransferase (243 aa).

7 helical membrane-spanning segments follow: residues Trp-8–Leu-28, Pro-36–Leu-56, Val-58–Leu-78, Ala-107–Ser-127, Lys-131–Ala-151, Phe-187–Pro-207, and Tyr-222–Ala-242.

This sequence belongs to the CobS family. It depends on Mg(2+) as a cofactor.

It is found in the cell inner membrane. The catalysed reaction is alpha-ribazole + adenosylcob(III)inamide-GDP = adenosylcob(III)alamin + GMP + H(+). It carries out the reaction alpha-ribazole 5'-phosphate + adenosylcob(III)inamide-GDP = adenosylcob(III)alamin 5'-phosphate + GMP + H(+). Its pathway is cofactor biosynthesis; adenosylcobalamin biosynthesis; adenosylcobalamin from cob(II)yrinate a,c-diamide: step 7/7. Functionally, joins adenosylcobinamide-GDP and alpha-ribazole to generate adenosylcobalamin (Ado-cobalamin). Also synthesizes adenosylcobalamin 5'-phosphate from adenosylcobinamide-GDP and alpha-ribazole 5'-phosphate. The chain is Adenosylcobinamide-GDP ribazoletransferase from Thermosynechococcus vestitus (strain NIES-2133 / IAM M-273 / BP-1).